The primary structure comprises 142 residues: Hemoglobin subunit alpha-B (142 aa).

The 141-residue stretch at 2 to 142 (VLSPTDKSNV…VSTVLTSKYR (141 aa)) folds into the Globin domain. An O2-binding site is contributed by H59. A heme b-binding site is contributed by H88.

Belongs to the globin family. In terms of assembly, heterotetramer of two alpha chains and two beta chains. In terms of tissue distribution, red blood cells.

Functionally, involved in oxygen transport from the lung to the various peripheral tissues. The protein is Hemoglobin subunit alpha-B (HBAB) of Otolemur crassicaudatus (Brown greater galago).